A 119-amino-acid chain; its full sequence is Beta-2-microglobulin (119 aa).

The signal sequence occupies residues 1-20 (MARSVVAALLVLLSLSGLEA). One can recognise an Ig-like C1-type domain in the interval 25–114 (PKIQVYSRHP…VTFPTPKTVK (90 aa)). A disulfide bond links C45 and C100.

This sequence belongs to the beta-2-microglobulin family. Heterodimer of an alpha chain and a beta chain. Beta-2-microglobulin is the beta-chain of major histocompatibility complex class I molecules.

It localises to the secreted. Functionally, component of the class I major histocompatibility complex (MHC). Involved in the presentation of peptide antigens to the immune system. The sequence is that of Beta-2-microglobulin (B2M) from Saimiri boliviensis boliviensis (Bolivian squirrel monkey).